The sequence spans 378 residues: MTQTSQRPLRVLAAMSGGVDSAVAAARAAEAGHDVTGVHLALSANPQSFRTGARGCCTIEDSRDARRAADVIGIPFYVWDLAERFREDVVEDFVAEYEAGRTPNPCLRCNEKIKFAALLDKALALGFDAVCTGHYATVVLAEDGSRELHRASDMAKDQSYVLGVLDEKQLAHAMFPLGDTLTTKDEIRAEAERRGLAVAKKPDSHDICFIADGDTQGFLANRLGGPAEGDILDESGTKLGTHEGAFGFTIGQRKGLKIGHPAPDGKPRYVLDISPVNNTVTVGPVEALDVTALTAIKPRWCGTPPSGPGTYTAQLRAHGGESEVTAELVDGTELNVTFTEPVRGVAPGQAVVLYDGTRVVGSATIATTVRRERVATGG.

ATP-binding positions include 14-21 (AMSGGVDS) and Leu40. Catalysis depends on Cys109, which acts as the Nucleophile. Cys109 and Cys208 form a disulfide bridge. Gly133 provides a ligand contact to ATP. The segment at 156–158 (KDQ) is interaction with tRNA. Cys208 (cysteine persulfide intermediate) is an active-site residue.

The protein belongs to the MnmA/TRMU family.

It is found in the cytoplasm. The catalysed reaction is S-sulfanyl-L-cysteinyl-[protein] + uridine(34) in tRNA + AH2 + ATP = 2-thiouridine(34) in tRNA + L-cysteinyl-[protein] + A + AMP + diphosphate + H(+). Catalyzes the 2-thiolation of uridine at the wobble position (U34) of tRNA, leading to the formation of s(2)U34. This chain is tRNA-specific 2-thiouridylase MnmA, found in Streptomyces griseus subsp. griseus (strain JCM 4626 / CBS 651.72 / NBRC 13350 / KCC S-0626 / ISP 5235).